The sequence spans 237 residues: MRKVTLVFSAIAFAFSLNGVVQAKVQMPESVSSGVTTVELSQRQAVHWVSVEQIEKSLQDQPPMAIGFDIDDTVLFSSPGFYRGKLKYSPNDNSYLKNPAFWEKMNNEWDEFSMPKQIGIELVQMHLKRGDNIYFITGRTKTKTETVTKYLQEDLHIPADKMNVVIFAGDDPGKNNKISWMKEHKLKLYYGDADADIAAAHELNIRGIRILRASNSSYQPLPKAGRFGEEVVIKSEY.

The N-terminal stretch at 1–23 is a signal peptide; that stretch reads MRKVTLVFSAIAFAFSLNGVVQA. The active-site Nucleophile is the aspartate 69. Mg(2+) is bound by residues aspartate 69 and aspartate 71. The active-site Proton donor is aspartate 71. Substrate contacts are provided by residues 137-138 and lysine 177; that span reads TG. Mg(2+) is bound at residue aspartate 192.

Belongs to the class B bacterial acid phosphatase family. In terms of assembly, homotetramer. Mg(2+) serves as cofactor.

The protein localises to the periplasm. The enzyme catalyses a phosphate monoester + H2O = an alcohol + phosphate. Dephosphorylates several organic phosphate monoesters. Also has a phosphotransferase activity catalyzing the transfer of low-energy phosphate groups from organic phosphate monoesters to free hydroxyl groups of various organic compounds. This Xenorhabdus bovienii (strain SS-2004) (Xenorhabdus nematophila subsp. bovienii) protein is Class B acid phosphatase.